A 241-amino-acid polypeptide reads, in one-letter code: High mobility group B protein 7 (241 aa).

Composition is skewed to polar residues over residues 1 to 11 (MAGPSTTSNAP) and 20 to 29 (ETSSNTSTTL). 3 disordered regions span residues 1–30 (MAGP…TTLR), 75–116 (TQAE…NKPK), and 174–241 (EYNK…LDDY). The span at 77 to 90 (AEAKKKPAEKKKTT) shows a compositional bias: basic and acidic residues. A DNA-binding region (HMG box) is located at residues 115-183 (PKRPLTAFFI…EYNKSLESND (69 aa)). Acidic residues-rich tracts occupy residues 182–221 (NDAD…ENTD) and 229–241 (GKEE…LDDY).

It belongs to the HMGB family. Post-translationally, phosphorylated. Expressed at low levels in lateral roots, root tips, cotyledons, leaves and flowers (including pedicels, but excluding styles).

It localises to the nucleus. Binds preferentially double-stranded supercoiled DNA. Required for karyogamy during female gametophyte development, when the two polar nuclei fuse to form the diploid central cell nucleus. This Arabidopsis thaliana (Mouse-ear cress) protein is High mobility group B protein 7 (HMGB7).